The sequence spans 151 residues: Cytochrome c-type biogenesis protein CcmE (151 aa).

Residues 1–9 (MKGLKKKRR) are Cytoplasmic-facing. A helical; Signal-anchor for type II membrane protein transmembrane segment spans residues 10 to 30 (IQIIALAFVALAGSTALIGYA). At 31-151 (MRDGINFFRS…FQHTEDQPQG (121 aa)) the chain is on the periplasmic side. Positions 123 and 127 each coordinate heme.

This sequence belongs to the CcmE/CycJ family.

The protein localises to the cell inner membrane. In terms of biological role, heme chaperone required for the biogenesis of c-type cytochromes. Transiently binds heme delivered by CcmC and transfers the heme to apo-cytochromes in a process facilitated by CcmF and CcmH. The polypeptide is Cytochrome c-type biogenesis protein CcmE (Cereibacter sphaeroides (strain ATCC 17029 / ATH 2.4.9) (Rhodobacter sphaeroides)).